The following is a 444-amino-acid chain: Chromosome partition protein MukF (444 aa).

The segment at 212–240 is leucine-zipper; sequence LDETSGNLRELQDTLNAAGDKLQAQLLRI.

This sequence belongs to the MukF family. In terms of assembly, interacts, and probably forms a ternary complex, with MukE and MukB via its C-terminal region. The complex formation is stimulated by calcium or magnesium. It is required for an interaction between MukE and MukB.

Its subcellular location is the cytoplasm. It is found in the nucleoid. Functionally, involved in chromosome condensation, segregation and cell cycle progression. May participate in facilitating chromosome segregation by condensation DNA from both sides of a centrally located replisome during cell division. Not required for mini-F plasmid partitioning. Probably acts via its interaction with MukB and MukE. Overexpression results in anucleate cells. It has a calcium binding activity. In Haemophilus influenzae (strain ATCC 51907 / DSM 11121 / KW20 / Rd), this protein is Chromosome partition protein MukF.